The following is a 513-amino-acid chain: Cyclin-dependent kinase C-2 (513 aa).

In terms of domain architecture, Protein kinase spans 25-325 (FEKLEQIGEG…AKDALDAEYF (301 aa)). Residues 31–39 (IGEGTYGQV) and Lys-54 contribute to the ATP site. Thr-35 is modified (phosphothreonine). At Tyr-36 the chain carries Phosphotyrosine. The active-site Proton acceptor is the Asp-164. A Phosphoserine modification is found at Ser-191. Residue Thr-198 is modified to Phosphothreonine. The segment covering 336-348 (SLPKYEASHEFQT) has biased composition (basic and acidic residues). Positions 336–513 (SLPKYEASHE…RNQQQYGNWQ (178 aa)) are disordered. Low complexity predominate over residues 417-433 (PNRYPQGGNQGGYNPNR). Gly residues-rich tracts occupy residues 457–478 (GGGMGGAGGPRGGGGSGYGVGG) and 485–494 (GPYGASGPGR). Over residues 497 to 513 (NYNQGGSRNQQQYGNWQ) the composition is skewed to polar residues.

This sequence belongs to the protein kinase superfamily. CMGC Ser/Thr protein kinase family. CDC2/CDKX subfamily.

It catalyses the reaction L-seryl-[protein] + ATP = O-phospho-L-seryl-[protein] + ADP + H(+). The catalysed reaction is L-threonyl-[protein] + ATP = O-phospho-L-threonyl-[protein] + ADP + H(+). The enzyme catalyses [DNA-directed RNA polymerase] + ATP = phospho-[DNA-directed RNA polymerase] + ADP + H(+). This chain is Cyclin-dependent kinase C-2 (CDKC-2), found in Oryza sativa subsp. japonica (Rice).